The chain runs to 946 residues: Isoleucine--tRNA ligase (946 aa).

A 'HIGH' region motif is present at residues 58-68; sequence PYANGSIHIGH. Glu568 lines the L-isoleucyl-5'-AMP pocket. The short motif at 609-613 is the 'KMSKS' region element; it reads KMSKS. An ATP-binding site is contributed by Lys612. Zn(2+) is bound by residues Cys908, Cys911, Cys928, and Cys931.

This sequence belongs to the class-I aminoacyl-tRNA synthetase family. IleS type 1 subfamily. Monomer. Requires Zn(2+) as cofactor.

Its subcellular location is the cytoplasm. It carries out the reaction tRNA(Ile) + L-isoleucine + ATP = L-isoleucyl-tRNA(Ile) + AMP + diphosphate. In terms of biological role, catalyzes the attachment of isoleucine to tRNA(Ile). As IleRS can inadvertently accommodate and process structurally similar amino acids such as valine, to avoid such errors it has two additional distinct tRNA(Ile)-dependent editing activities. One activity is designated as 'pretransfer' editing and involves the hydrolysis of activated Val-AMP. The other activity is designated 'posttransfer' editing and involves deacylation of mischarged Val-tRNA(Ile). This is Isoleucine--tRNA ligase from Chromohalobacter salexigens (strain ATCC BAA-138 / DSM 3043 / CIP 106854 / NCIMB 13768 / 1H11).